The chain runs to 402 residues: Type II NADH:quinone oxidoreductase (402 aa).

Residues 12 to 16 (GAGYA), 39 to 40 (NK), and V83 each bind FAD. The active site involves E172. FAD-binding positions include D302, 319-320 (AQ), and K379.

This sequence belongs to the NADH dehydrogenase family. Requires FAD as cofactor.

It localises to the cell membrane. The enzyme catalyses a quinone + NADH + H(+) = a quinol + NAD(+). Functionally, alternative, nonproton pumping NADH:quinone oxidoreductase that delivers electrons to the respiratory chain by oxidation of NADH and reduction of quinones, and contributes to the regeneration of NAD(+). In Staphylococcus epidermidis (strain ATCC 12228 / FDA PCI 1200), this protein is Type II NADH:quinone oxidoreductase.